We begin with the raw amino-acid sequence, 255 residues long: MATLYWQTEGAGNTDLVLLHGWGLNAQVWQSIIARLAPHFRLHVVDLPGYGRSQGFGAMSLSDMANIVLAQAPERAIWLGWSLGGLVASQIALSAPERVDKLITVASSPCFSAQDGWPGIKPDVLQGFQQQLSEDFQRTVERFLALQTLGTESARQDARLLKSVVLEQPMPSVEVLNGGLDILREADLRQPLADLAVPFLRLYGALDGLVPRKVAGLLDEQWLNSTSVVIPKAAHAPFISHPDAFTEQVIAFAQA.

An AB hydrolase-1 domain is found at 16-242 (LVLLHGWGLN…AAHAPFISHP (227 aa)). Substrate is bound by residues tryptophan 22, 82–83 (SL), and 143–147 (FLALQ). Serine 82 functions as the Nucleophile in the catalytic mechanism. Active-site residues include aspartate 207 and histidine 235. Histidine 235 is a substrate binding site.

Belongs to the AB hydrolase superfamily. Carboxylesterase BioH family. Monomer.

The protein resides in the cytoplasm. The catalysed reaction is 6-carboxyhexanoyl-[ACP] methyl ester + H2O = 6-carboxyhexanoyl-[ACP] + methanol + H(+). The protein operates within cofactor biosynthesis; biotin biosynthesis. Its function is as follows. The physiological role of BioH is to remove the methyl group introduced by BioC when the pimeloyl moiety is complete. It allows to synthesize pimeloyl-ACP via the fatty acid synthetic pathway through the hydrolysis of the ester bonds of pimeloyl-ACP esters. The sequence is that of Pimeloyl-[acyl-carrier protein] methyl ester esterase from Pectobacterium carotovorum subsp. carotovorum (strain PC1).